The chain runs to 208 residues: Harpin secretion protein HrpW (208 aa).

4 helical membrane-spanning segments follow: residues 2-22 (LALF…CTAF), 46-66 (ALYG…AHDI), 149-169 (IGFL…NLLL), and 176-196 (VSPM…VSGW).

This sequence belongs to the FliP/MopC/SpaP family.

The protein resides in the cell membrane. Required for the secretion of harpin. This is Harpin secretion protein HrpW (hrpW) from Pseudomonas syringae pv. syringae.